Consider the following 289-residue polypeptide: 4-hydroxybenzoate octaprenyltransferase (289 aa).

9 helical membrane-spanning segments follow: residues 22 to 42 (AGWL…SHGF), 45 to 65 (WHLV…GCCI), 96 to 116 (LGLG…TNAV), 118 to 138 (IAWS…KRYV), 140 to 160 (MPQA…FAAV), 164 to 184 (VPPL…AYDT), 211 to 231 (VAGV…ALIQ), 236 to 256 (AIFM…GWLI), and 267 to 287 (AFRL…LSYW).

Belongs to the UbiA prenyltransferase family. The cofactor is Mg(2+).

The protein localises to the cell inner membrane. The catalysed reaction is all-trans-octaprenyl diphosphate + 4-hydroxybenzoate = 4-hydroxy-3-(all-trans-octaprenyl)benzoate + diphosphate. The protein operates within cofactor biosynthesis; ubiquinone biosynthesis. Catalyzes the prenylation of para-hydroxybenzoate (PHB) with an all-trans polyprenyl group. Mediates the second step in the final reaction sequence of ubiquinone-8 (UQ-8) biosynthesis, which is the condensation of the polyisoprenoid side chain with PHB, generating the first membrane-bound Q intermediate 3-octaprenyl-4-hydroxybenzoate. The protein is 4-hydroxybenzoate octaprenyltransferase of Polaromonas naphthalenivorans (strain CJ2).